A 317-amino-acid chain; its full sequence is Biotin synthase (317 aa).

In terms of domain architecture, Radical SAM core spans 42 to 260 (NRIQLSTLLS…IAVTRLCMPK (219 aa)). 3 residues coordinate [4Fe-4S] cluster: C57, C61, and C64. 4 residues coordinate [2Fe-2S] cluster: C101, C132, C192, and R264.

Belongs to the radical SAM superfamily. Biotin synthase family. In terms of assembly, homodimer. [4Fe-4S] cluster is required as a cofactor. [2Fe-2S] cluster serves as cofactor.

The catalysed reaction is (4R,5S)-dethiobiotin + (sulfur carrier)-SH + 2 reduced [2Fe-2S]-[ferredoxin] + 2 S-adenosyl-L-methionine = (sulfur carrier)-H + biotin + 2 5'-deoxyadenosine + 2 L-methionine + 2 oxidized [2Fe-2S]-[ferredoxin]. Its pathway is cofactor biosynthesis; biotin biosynthesis; biotin from 7,8-diaminononanoate: step 2/2. Functionally, catalyzes the conversion of dethiobiotin (DTB) to biotin by the insertion of a sulfur atom into dethiobiotin via a radical-based mechanism. In Thiobacillus denitrificans (strain ATCC 25259 / T1), this protein is Biotin synthase.